Reading from the N-terminus, the 420-residue chain is Protein translocase subunit SecY (420 aa).

10 helical membrane-spanning segments follow: residues 9–29, 61–81, 104–124, 141–161, 173–193, 203–223, 257–277, 300–320, 355–375, and 377–397; these read ILIT…PIPG, LSII…MELL, IVRY…SVGL, VFMI…MWIG, ISLI…SGTF, ILML…IIYV, LSGV…STIL, YNIL…SIVF, KLTL…WILV, and AMGV…QVAI.

Belongs to the SecY/SEC61-alpha family. As to quaternary structure, component of the Sec protein translocase complex. Heterotrimer consisting of SecY, SecE and SecG subunits. The heterotrimers can form oligomers, although 1 heterotrimer is thought to be able to translocate proteins. Interacts with the ribosome. Interacts with SecDF, and other proteins may be involved. Interacts with SecA.

Its subcellular location is the cell inner membrane. In terms of biological role, the central subunit of the protein translocation channel SecYEG. Consists of two halves formed by TMs 1-5 and 6-10. These two domains form a lateral gate at the front which open onto the bilayer between TMs 2 and 7, and are clamped together by SecE at the back. The channel is closed by both a pore ring composed of hydrophobic SecY resides and a short helix (helix 2A) on the extracellular side of the membrane which forms a plug. The plug probably moves laterally to allow the channel to open. The ring and the pore may move independently. The protein is Protein translocase subunit SecY of Helicobacter pylori (strain J99 / ATCC 700824) (Campylobacter pylori J99).